The sequence spans 170 residues: Cyclic pyranopterin monophosphate synthase 1 (170 aa).

Residues 79–81 (LCH) and 116–117 (ME) contribute to the substrate site. D131 is an active-site residue.

It belongs to the MoaC family. In terms of assembly, homohexamer; trimer of dimers.

The catalysed reaction is (8S)-3',8-cyclo-7,8-dihydroguanosine 5'-triphosphate = cyclic pyranopterin phosphate + diphosphate. Its pathway is cofactor biosynthesis; molybdopterin biosynthesis. Catalyzes the conversion of (8S)-3',8-cyclo-7,8-dihydroguanosine 5'-triphosphate to cyclic pyranopterin monophosphate (cPMP). This is Cyclic pyranopterin monophosphate synthase 1 (moaC1) from Mycobacterium bovis (strain ATCC BAA-935 / AF2122/97).